The following is a 277-amino-acid chain: Carbonyl reductase [NADPH] 3 (277 aa).

Position 2 is an N-acetylserine (S2). Residues 10-34 (VTGA…GDVV), 38-42 (RDEAR), 63-64 (DI), and N90 each bind NADP(+). S30 carries the phosphoserine modification. Substrate is bound at residue S140. Y194 functions as the Proton acceptor in the catalytic mechanism. Position 194–198 (194–198 (YGVSK)) interacts with NADP(+).

It belongs to the short-chain dehydrogenases/reductases (SDR) family.

The protein localises to the cytoplasm. It catalyses the reaction a secondary alcohol + NADP(+) = a ketone + NADPH + H(+). It carries out the reaction a quinone + NADPH + H(+) = a quinol + NADP(+). In terms of biological role, catalyzes the NADPH-dependent reduction of carbonyl compounds to their corresponding alcohols. Has low NADPH-dependent oxidoreductase activity. Acts on several orthoquinones, as well as on non-quinone compounds, such as isatin or on the anticancer drug oracin. Best substrates for CBR3 is 1,2- naphthoquinone, hence could play a role in protection against cytotoxicity of exogenous quinones. Exerts activity toward ortho-quinones but not paraquinones. No endogenous substrate for CBR3 except isatin has been identified. This is Carbonyl reductase [NADPH] 3 from Rattus norvegicus (Rat).